Consider the following 151-residue polypeptide: Probable cGMP 3',5'-cyclic phosphodiesterase subunit delta (151 aa).

The protein belongs to the PDE6D/unc-119 family. As to quaternary structure, interacts with Pde6.

The protein resides in the nucleus. It is found in the cytoplasm. In Drosophila virilis (Fruit fly), this protein is Probable cGMP 3',5'-cyclic phosphodiesterase subunit delta.